Here is a 135-residue protein sequence, read N- to C-terminus: Ig heavy chain V region XIG14 (135 aa).

Residues 1-18 (DFIIFFIFMFFSPSCILS) form the signal peptide. One can recognise an Ig-like domain in the interval 20 to 128 (TLQESGPGTV…GYNFDYWGQG (109 aa)).

In Xenopus laevis (African clawed frog), this protein is Ig heavy chain V region XIG14.